The following is a 273-amino-acid chain: Formamidopyrimidine-DNA glycosylase (273 aa).

Residue Pro-2 is the Schiff-base intermediate with DNA of the active site. Residue Glu-3 is the Proton donor of the active site. Lys-58 functions as the Proton donor; for beta-elimination activity in the catalytic mechanism. DNA is bound by residues His-91, Arg-109, and Arg-154. The segment at 239 to 273 (FVYARTGEPCRICNAPVRQIVQGQRSTFYCPNCQK) adopts an FPG-type zinc-finger fold. Arg-263 acts as the Proton donor; for delta-elimination activity in catalysis.

It belongs to the FPG family. In terms of assembly, monomer. It depends on Zn(2+) as a cofactor.

It carries out the reaction Hydrolysis of DNA containing ring-opened 7-methylguanine residues, releasing 2,6-diamino-4-hydroxy-5-(N-methyl)formamidopyrimidine.. It catalyses the reaction 2'-deoxyribonucleotide-(2'-deoxyribose 5'-phosphate)-2'-deoxyribonucleotide-DNA = a 3'-end 2'-deoxyribonucleotide-(2,3-dehydro-2,3-deoxyribose 5'-phosphate)-DNA + a 5'-end 5'-phospho-2'-deoxyribonucleoside-DNA + H(+). Its function is as follows. Involved in base excision repair of DNA damaged by oxidation or by mutagenic agents. Acts as a DNA glycosylase that recognizes and removes damaged bases. Has a preference for oxidized purines, such as 7,8-dihydro-8-oxoguanine (8-oxoG). Has AP (apurinic/apyrimidinic) lyase activity and introduces nicks in the DNA strand. Cleaves the DNA backbone by beta-delta elimination to generate a single-strand break at the site of the removed base with both 3'- and 5'-phosphates. The sequence is that of Formamidopyrimidine-DNA glycosylase from Herminiimonas arsenicoxydans.